Reading from the N-terminus, the 270-residue chain is Thiazole synthase (270 aa).

The Schiff-base intermediate with DXP role is filled by lysine 112. 1-deoxy-D-xylulose 5-phosphate contacts are provided by residues glycine 173, 199 to 200, and 221 to 222; these read AG and NS.

This sequence belongs to the ThiG family. In terms of assembly, homotetramer. Forms heterodimers with either ThiH or ThiS.

Its subcellular location is the cytoplasm. The enzyme catalyses [ThiS sulfur-carrier protein]-C-terminal-Gly-aminoethanethioate + 2-iminoacetate + 1-deoxy-D-xylulose 5-phosphate = [ThiS sulfur-carrier protein]-C-terminal Gly-Gly + 2-[(2R,5Z)-2-carboxy-4-methylthiazol-5(2H)-ylidene]ethyl phosphate + 2 H2O + H(+). It functions in the pathway cofactor biosynthesis; thiamine diphosphate biosynthesis. Its function is as follows. Catalyzes the rearrangement of 1-deoxy-D-xylulose 5-phosphate (DXP) to produce the thiazole phosphate moiety of thiamine. Sulfur is provided by the thiocarboxylate moiety of the carrier protein ThiS. In vitro, sulfur can be provided by H(2)S. This is Thiazole synthase from Pseudomonas entomophila (strain L48).